The chain runs to 300 residues: Fe(3+) dicitrate-binding periplasmic protein FecB (300 aa).

The signal sequence occupies residues Met1–Ala21. The Fe/B12 periplasmic-binding domain maps to Arg39–Pro295.

The protein belongs to the bacterial solute-binding protein 8 family. The complex is composed of two ATP-binding proteins (FecE), two transmembrane proteins (FecC and FecD) and a solute-binding protein (FecB). Interacts with FecC and FecD.

It is found in the periplasm. Part of the ABC transporter complex FecBCDE involved in citrate-dependent Fe(3+) uptake. Binds both iron-free and iron-loaded citrate although it binds iron-loaded citrate with a higher affinity. Binds different forms of Fe(3+)-citrate as well as citrate complexed with various representative Fe(3+)-mimics (Ga(3+), Al(3+), Sc(3+) and In(3+)) and a representative divalent metal ion (Mg(2+)). Can also bind various tricarboxylates in iron-free and iron-loaded form. This chain is Fe(3+) dicitrate-binding periplasmic protein FecB, found in Escherichia coli (strain K12).